Reading from the N-terminus, the 1034-residue chain is Protein argonaute 2 (1034 aa).

The interval 1 to 201 is disordered; sequence MEHERGGGGR…PMRRPDGGGS (201 aa). Gly residues predominate over residues 18-125; the sequence is GGRGGGGGDG…ESGGGGGRGG (108 aa). Positions 172–187 are enriched in low complexity; sequence VVRVQPPAPPVAVSRS. In terms of domain architecture, PAZ spans 391–504; sequence PVLDLVQKSV…VPIELCDLLE (114 aa). Residues 688–989 form the Piwi domain; sequence LLFCPMSDQH…AAYRGRLYYE (302 aa).

This sequence belongs to the argonaute family. Ago subfamily.

In terms of biological role, probably involved in the RNA silencing pathway. May bind to short RNAs such as microRNAs (miRNAs) or short interfering RNAs (siRNAs), and represses the translation of mRNAs which are complementary to them. The protein is Protein argonaute 2 (AGO2) of Oryza sativa subsp. japonica (Rice).